The primary structure comprises 891 residues: 26S proteasome non-ATPase regulatory subunit 2 homolog B (891 aa).

The segment at 1 to 43 (MAPVPDPNSVGGGAKRDEATTKIPSKDSKKKDDKKEEDLSEED) is disordered. Positions 14 to 37 (AKRDEATTKIPSKDSKKKDDKKEE) are enriched in basic and acidic residues. PC repeat units lie at residues 414 to 447 (SAVA…PVVA), 448 to 484 (GALL…SVRI), 485 to 519 (GAIM…PLDV), 522 to 556 (FAAL…AELG), 565 to 594 (LGLG…KIRK), 674 to 705 (LALG…EVAM), and 724 to 739 (AGML…KDAS).

This sequence belongs to the proteasome subunit S2 family. As to quaternary structure, component of the 19S regulatory particle (RP/PA700) base subcomplex of the 26S proteasome. The 26S proteasome is composed of a core protease (CP), known as the 20S proteasome, capped at one or both ends by the 19S regulatory particle (RP/PA700). The RP/PA700 complex is composed of at least 17 different subunits in two subcomplexes, the base and the lid, which form the portions proximal and distal to the 20S proteolytic core, respectively. In terms of processing, ubiquitinated. As to expression, expressed in stems, leaves, buds, flowers, siliques and developing seeds.

Functionally, acts as a regulatory subunit of the 26 proteasome which is involved in the ATP-dependent degradation of ubiquitinated proteins. This is 26S proteasome non-ATPase regulatory subunit 2 homolog B (RPN1B) from Arabidopsis thaliana (Mouse-ear cress).